Consider the following 420-residue polypeptide: ATP-dependent Clp protease ATP-binding subunit ClpX (420 aa).

Positions 3–57 constitute a ClpX-type ZB domain; sequence KKTPGTNGKQKLFCSFCGKEQDAVKRLVAGPGVYICDECISLCNEIIAEDHEHSH. The Zn(2+) site is built by cysteine 16, cysteine 19, cysteine 38, and cysteine 41. 122–129 contributes to the ATP binding site; the sequence is PTGSGKTL.

Belongs to the ClpX chaperone family. In terms of assembly, component of the ClpX-ClpP complex. Forms a hexameric ring that, in the presence of ATP, binds to fourteen ClpP subunits assembled into a disk-like structure with a central cavity, resembling the structure of eukaryotic proteasomes.

In terms of biological role, ATP-dependent specificity component of the Clp protease. It directs the protease to specific substrates. Can perform chaperone functions in the absence of ClpP. The polypeptide is ATP-dependent Clp protease ATP-binding subunit ClpX (Leptospira borgpetersenii serovar Hardjo-bovis (strain L550)).